The following is a 204-amino-acid chain: Somatotropin (204 aa).

Positions 1–17 (MDRAVLLLSVLSLGVSS) are cleaved as a signal peptide. Gln18 bears the Pyrrolidone carboxylic acid mark. His35 is a binding site for Zn(2+). Cys69 and Cys177 are disulfide-bonded. Residue Glu186 coordinates Zn(2+). An intrachain disulfide couples Cys194 to Cys202.

It belongs to the somatotropin/prolactin family.

The protein localises to the secreted. Functionally, growth hormone plays an important role in growth control and is involved in the regulation of several anabolic processes. Implicated as an osmoregulatory substance important for seawater adaptation. This chain is Somatotropin (gh), found in Morone saxatilis (Striped bass).